We begin with the raw amino-acid sequence, 206 residues long: Molybdopterin synthase catalytic subunit (206 aa).

The span at Met1–Ala23 shows a compositional bias: polar residues. The tract at residues Met1–Glu27 is disordered. Substrate contacts are provided by residues His131–Arg132, Lys147, and Lys154–Glu156. Positions Lys177–Val188 are enriched in basic and acidic residues. The interval Lys177–Ser206 is disordered. Residues Ser197 to Ser206 show a composition bias toward gly residues.

Belongs to the MoaE family. MOCS2B subfamily. As to quaternary structure, heterotetramer; composed of 2 small (MOCS2A) and 2 large (MOCS2B) subunits.

It localises to the cytoplasm. The catalysed reaction is 2 [molybdopterin-synthase sulfur-carrier protein]-C-terminal-Gly-aminoethanethioate + cyclic pyranopterin phosphate + H2O = molybdopterin + 2 [molybdopterin-synthase sulfur-carrier protein]-C-terminal Gly-Gly + 2 H(+). The protein operates within cofactor biosynthesis; molybdopterin biosynthesis. Functionally, catalytic subunit of the molybdopterin synthase complex, a complex that catalyzes the conversion of precursor Z into molybdopterin. Acts by mediating the incorporation of 2 sulfur atoms from thiocarboxylated MOCS2A into precursor Z to generate a dithiolene group. The polypeptide is Molybdopterin synthase catalytic subunit (nit-8) (Neurospora crassa (strain ATCC 24698 / 74-OR23-1A / CBS 708.71 / DSM 1257 / FGSC 987)).